Reading from the N-terminus, the 172-residue chain is Large ribosomal subunit protein uL10 (172 aa).

Belongs to the universal ribosomal protein uL10 family. Part of the ribosomal stalk of the 50S ribosomal subunit. The N-terminus interacts with L11 and the large rRNA to form the base of the stalk. The C-terminus forms an elongated spine to which L12 dimers bind in a sequential fashion forming a multimeric L10(L12)X complex.

In terms of biological role, forms part of the ribosomal stalk, playing a central role in the interaction of the ribosome with GTP-bound translation factors. The chain is Large ribosomal subunit protein uL10 from Chlorobium phaeovibrioides (strain DSM 265 / 1930) (Prosthecochloris vibrioformis (strain DSM 265)).